Consider the following 58-residue polypeptide: Small ribosomal subunit protein bS21 (58 aa).

The interval 36–58 is disordered; it reads EHYEKPSVKRKKKSEAARKRKFK. Basic residues predominate over residues 43 to 58; that stretch reads VKRKKKSEAARKRKFK.

It belongs to the bacterial ribosomal protein bS21 family.

This is Small ribosomal subunit protein bS21 from Clostridium kluyveri (strain NBRC 12016).